The primary structure comprises 199 residues: 3-isopropylmalate dehydratase small subunit (199 aa).

It belongs to the LeuD family. LeuD type 1 subfamily. In terms of assembly, heterodimer of LeuC and LeuD.

It catalyses the reaction (2R,3S)-3-isopropylmalate = (2S)-2-isopropylmalate. Its pathway is amino-acid biosynthesis; L-leucine biosynthesis; L-leucine from 3-methyl-2-oxobutanoate: step 2/4. In terms of biological role, catalyzes the isomerization between 2-isopropylmalate and 3-isopropylmalate, via the formation of 2-isopropylmaleate. The chain is 3-isopropylmalate dehydratase small subunit from Kocuria rhizophila (strain ATCC 9341 / DSM 348 / NBRC 103217 / DC2201).